The sequence spans 113 residues: Cytochrome c (113 aa).

The residue at position 1 (Ala-1) is an N-acetylalanine. 3 residues coordinate heme c: Cys-22, Cys-25, and His-26. An N6,N6,N6-trimethyllysine modification is found at Lys-80. Met-88 contacts heme c. Lys-94 carries the N6,N6,N6-trimethyllysine modification.

Belongs to the cytochrome c family. In terms of processing, binds 1 heme c group covalently per subunit.

Its subcellular location is the mitochondrion intermembrane space. Electron carrier protein. The oxidized form of the cytochrome c heme group can accept an electron from the heme group of the cytochrome c1 subunit of cytochrome reductase. Cytochrome c then transfers this electron to the cytochrome oxidase complex, the final protein carrier in the mitochondrial electron-transport chain. The polypeptide is Cytochrome c (Ginkgo biloba (Ginkgo)).